We begin with the raw amino-acid sequence, 201 residues long: Recombination protein RecR (201 aa).

The segment at 57-72 (CKYCANFTNKDECDIC) adopts a C4-type zinc-finger fold. The Toprim domain occupies 80–176 (TKLMIVTTNE…QIYRIGFGIP (97 aa)).

This sequence belongs to the RecR family.

May play a role in DNA repair. It seems to be involved in an RecBC-independent recombinational process of DNA repair. It may act with RecF and RecO. The polypeptide is Recombination protein RecR (Ureaplasma parvum serovar 3 (strain ATCC 27815 / 27 / NCTC 11736)).